A 310-amino-acid chain; its full sequence is 4-hydroxyproline 2-epimerase (310 aa).

The Proton acceptor role is filled by cysteine 88. Substrate-binding positions include glycine 89 to histidine 90, histidine 208, and aspartate 232. The Proton donor role is filled by cysteine 236. Residue glycine 237–threonine 238 participates in substrate binding.

Belongs to the proline racemase family.

It carries out the reaction trans-4-hydroxy-L-proline = cis-4-hydroxy-D-proline. In terms of biological role, catalyzes the epimerization of trans-4-hydroxy-L-proline (t4LHyp) to cis-4-hydroxy-D-proline (c4DHyp). Is likely involved in a degradation pathway that converts t4LHyp to alpha-ketoglutarate. Displays no proline racemase activity. The sequence is that of 4-hydroxyproline 2-epimerase from Pseudomonas fluorescens (strain ATCC BAA-477 / NRRL B-23932 / Pf-5).